We begin with the raw amino-acid sequence, 921 residues long: Valine--tRNA ligase (921 aa).

The 'HIGH' region motif lies at 40–50 (PNVTGSLHMGH). The short motif at 522–526 (KMSKS) is the 'KMSKS' region element. Residue Lys525 coordinates ATP. A coiled-coil region spans residues 849–921 (MADLIDKEAE…LQHKNRIESL (73 aa)).

This sequence belongs to the class-I aminoacyl-tRNA synthetase family. ValS type 1 subfamily. As to quaternary structure, monomer.

The protein resides in the cytoplasm. It carries out the reaction tRNA(Val) + L-valine + ATP = L-valyl-tRNA(Val) + AMP + diphosphate. Functionally, catalyzes the attachment of valine to tRNA(Val). As ValRS can inadvertently accommodate and process structurally similar amino acids such as threonine, to avoid such errors, it has a 'posttransfer' editing activity that hydrolyzes mischarged Thr-tRNA(Val) in a tRNA-dependent manner. This Legionella pneumophila (strain Paris) protein is Valine--tRNA ligase.